A 237-amino-acid polypeptide reads, in one-letter code: tRNA1(Val) (adenine(37)-N6)-methyltransferase (237 aa).

It belongs to the methyltransferase superfamily. tRNA (adenine-N(6)-)-methyltransferase family.

The protein localises to the cytoplasm. The catalysed reaction is adenosine(37) in tRNA1(Val) + S-adenosyl-L-methionine = N(6)-methyladenosine(37) in tRNA1(Val) + S-adenosyl-L-homocysteine + H(+). Functionally, specifically methylates the adenine in position 37 of tRNA(1)(Val) (anticodon cmo5UAC). This is tRNA1(Val) (adenine(37)-N6)-methyltransferase from Parabacteroides distasonis (strain ATCC 8503 / DSM 20701 / CIP 104284 / JCM 5825 / NCTC 11152).